The primary structure comprises 375 residues: 23S rRNA (uracil(747)-C(5))-methyltransferase RlmC (375 aa).

Residues C3, C11, C14, and C87 each contribute to the [4Fe-4S] cluster site. S-adenosyl-L-methionine is bound by residues Q212, F241, E262, and N307. The active-site Nucleophile is C334.

It belongs to the class I-like SAM-binding methyltransferase superfamily. RNA M5U methyltransferase family. RlmC subfamily.

It catalyses the reaction uridine(747) in 23S rRNA + S-adenosyl-L-methionine = 5-methyluridine(747) in 23S rRNA + S-adenosyl-L-homocysteine + H(+). Catalyzes the formation of 5-methyl-uridine at position 747 (m5U747) in 23S rRNA. The chain is 23S rRNA (uracil(747)-C(5))-methyltransferase RlmC from Escherichia coli O139:H28 (strain E24377A / ETEC).